The sequence spans 150 residues: Cytochrome c oxidase subunit 5A, mitochondrial (150 aa).

The N-terminal 41 residues, M1–Y41, are a transit peptide targeting the mitochondrion. Residues L2 to A17 carry the SIFI-degron motif. K87 and K113 each carry N6-acetyllysine. Residue T141 is modified to Phosphothreonine.

This sequence belongs to the cytochrome c oxidase subunit 5A family. Component of the cytochrome c oxidase (complex IV, CIV), a multisubunit enzyme composed of 14 subunits. The complex is composed of a catalytic core of 3 subunits MT-CO1, MT-CO2 and MT-CO3, encoded in the mitochondrial DNA, and 11 supernumerary subunits COX4I1 (or COX4I2), COX5A, COX5B, COX6A1 (or COX6A2), COX6B1 (or COX6B2), COX6C, COX7A2 (or COX7A1), COX7B, COX7C, COX8A and NDUFA4, which are encoded in the nuclear genome. The complex exists as a monomer or a dimer and forms supercomplexes (SCs) in the inner mitochondrial membrane with NADH-ubiquinone oxidoreductase (complex I, CI) and ubiquinol-cytochrome c oxidoreductase (cytochrome b-c1 complex, complex III, CIII), resulting in different assemblies (supercomplex SCI(1)III(2)IV(1) and megacomplex MCI(2)III(2)IV(2)). Interacts with AFG1L. Interacts with RAB5IF. Post-translationally, in response to mitochondrial stress, the precursor protein is ubiquitinated by the SIFI complex in the cytoplasm before mitochondrial import, leading to its degradation. Within the SIFI complex, UBR4 initiates ubiquitin chain that are further elongated or branched by KCMF1.

The protein localises to the mitochondrion inner membrane. The protein operates within energy metabolism; oxidative phosphorylation. In terms of biological role, component of the cytochrome c oxidase, the last enzyme in the mitochondrial electron transport chain which drives oxidative phosphorylation. The respiratory chain contains 3 multisubunit complexes succinate dehydrogenase (complex II, CII), ubiquinol-cytochrome c oxidoreductase (cytochrome b-c1 complex, complex III, CIII) and cytochrome c oxidase (complex IV, CIV), that cooperate to transfer electrons derived from NADH and succinate to molecular oxygen, creating an electrochemical gradient over the inner membrane that drives transmembrane transport and the ATP synthase. Cytochrome c oxidase is the component of the respiratory chain that catalyzes the reduction of oxygen to water. Electrons originating from reduced cytochrome c in the intermembrane space (IMS) are transferred via the dinuclear copper A center (CU(A)) of subunit 2 and heme A of subunit 1 to the active site in subunit 1, a binuclear center (BNC) formed by heme A3 and copper B (CU(B)). The BNC reduces molecular oxygen to 2 water molecules using 4 electrons from cytochrome c in the IMS and 4 protons from the mitochondrial matrix. This Homo sapiens (Human) protein is Cytochrome c oxidase subunit 5A, mitochondrial (COX5A).